The following is a 169-amino-acid chain: Ribosome maturation factor RimM (169 aa).

Residues 97-169 form the PRC barrel domain; that stretch reads EDEYYWADLV…TITADWGLDY (73 aa).

It belongs to the RimM family. Binds ribosomal protein uS19.

The protein resides in the cytoplasm. Functionally, an accessory protein needed during the final step in the assembly of 30S ribosomal subunit, possibly for assembly of the head region. Essential for efficient processing of 16S rRNA. May be needed both before and after RbfA during the maturation of 16S rRNA. It has affinity for free ribosomal 30S subunits but not for 70S ribosomes. This is Ribosome maturation factor RimM from Neisseria gonorrhoeae (strain ATCC 700825 / FA 1090).